Here is a 20-residue protein sequence, read N- to C-terminus: Isocitrate dehydrogenase [NADP] (20 aa).

Belongs to the isocitrate and isopropylmalate dehydrogenases family. Mn(2+) is required as a cofactor. Requires Mg(2+) as cofactor.

The protein localises to the cytoplasm. It catalyses the reaction D-threo-isocitrate + NADP(+) = 2-oxoglutarate + CO2 + NADPH. The chain is Isocitrate dehydrogenase [NADP] from Naegleria fowleri (Brain eating amoeba).